Reading from the N-terminus, the 698-residue chain is Protein arginine N-methyltransferase 7 (698 aa).

SAM-dependent MTase PRMT-type domains are found at residues 14–357 (QNTW…YSLW) and 366–698 (EKPA…EKSE).

It belongs to the class I-like SAM-binding methyltransferase superfamily. Protein arginine N-methyltransferase family. PRMT7 subfamily.

Its function is as follows. Essential arginine methyltransferase that can both catalyze the formation of omega-N monomethylarginine (MMA) and symmetrical dimethylarginine (sDMA). Specifically mediates the symmetrical dimethylation of arginine residues in the small nuclear ribonucleoproteins SmD1 and SmD3. This is Protein arginine N-methyltransferase 7 (Art7) from Drosophila mojavensis (Fruit fly).